Reading from the N-terminus, the 270-residue chain is Bark lectin (270 aa).

The N-terminal stretch at 1 to 15 is a signal peptide; it reads ISITFFLLLLNKVNS. Residues Asn-60, Asn-76, and Asn-127 are each glycosylated (N-linked (GlcNAc...) asparagine). Mn(2+) contacts are provided by Glu-141 and Asp-143. Ca(2+) contacts are provided by Asp-143, His-145, Asn-147, and Asp-150. Mn(2+) is bound by residues Asp-150 and His-155. Asn-201 carries N-linked (GlcNAc...) asparagine glycosylation.

Belongs to the leguminous lectin family.

GalNAc-specific lectin. The sequence is that of Bark lectin from Styphnolobium japonicum (Japanese pagoda tree).